A 187-amino-acid chain; its full sequence is UPF0340 protein stu1894 (187 aa).

The protein belongs to the UPF0340 family.

The polypeptide is UPF0340 protein stu1894 (Streptococcus thermophilus (strain ATCC BAA-250 / LMG 18311)).